Reading from the N-terminus, the 953-residue chain is Ubiquitin carboxyl-terminal hydrolase CYLD (953 aa).

The tract at residues 106–590 is interaction with TRIP; that stretch reads CEERLSLFRN…LEIMIGKKKG (485 aa). 2 CAP-Gly domains span residues 153-198 and 253-286; these read LAER…VFVA and DVLPGKESLGYFVGVDMDNPIGNWDGRFDGVQLC. A disordered region spans residues 318 to 350; the sequence is FMSRGVGDKGSSSHNKPKVTGSTSDPGSRNRSE. Residues 327 to 346 show a composition bias toward polar residues; that stretch reads GSSSHNKPKVTGSTSDPGSR. At Ser-384 the chain carries Phosphoserine. The interval 387–410 is disordered; that stretch reads EMSSDFGHSSPPPQPPSMNSLSSE. Residues 391-466 are interaction with TRAF2; it reads DFGHSSPPPQ…MPSSSGNAHG (76 aa). Phosphoserine occurs at positions 415 and 419. An interaction with IKBKG/NEMO region spans residues 467–681; that stretch reads LEVGSLAEVK…FTSEEKDPEE (215 aa). In terms of domain architecture, CAP-Gly 3 spans 489–532; the sequence is GQPPGLSDVLAGLELEDECAGCTDGTFRGTRYFTCALKKALFVK. One can recognise a USP domain in the interval 589–947; it reads KGIQGHYNSC…DAYMCMYQSP (359 aa). The Nucleophile role is filled by Cys-598. The B-box stretch occupies residues 778–830; sequence LEDTPRQCRICGGLAMYECRECYDDPDISAGKIKQFCKTCSTQVHLHPRRLNH. Zn(2+)-binding residues include Cys-785, Cys-788, Cys-796, Cys-799, Cys-814, Cys-817, His-822, and His-830. Catalysis depends on His-868, which acts as the Proton acceptor.

The protein belongs to the peptidase C19 family. As to quaternary structure, interacts (via CAP-Gly domain) with IKBKG/NEMO (via proline-rich C-terminal region). Interacts with TRAF2 and TRIP. Interacts with PLK1, DVL1, DVL3, MAVS, TBK1, IKKE and RIGI. Interacts (via CAP-Gly domain) with microtubules. Interacts with HDAC6 and BCL3. Interacts with MAP3K7. Identified in a complex with TRAF6 and SQSTM1. Interacts with OPTN and SQSTM1. Interacts with CEP350. Interacts with RNF31; the interaction is indirect and is mediated via SPATA2. Interacts with SPATA2 (via the PUB domain); the interaction is direct and recruits CYLD to the LUBAC complex, thereby regulating TNF-alpha-induced necroptosis. Post-translationally, phosphorylated on several serine residues by IKKA and/or IKKB in response to immune stimuli. Phosphorylation requires IKBKG. Phosphorylation abolishes TRAF2 deubiquitination, interferes with the activation of Jun kinases, and strongly reduces CD40-dependent gene activation by NF-kappa-B. Ubiquitinated. Polyubiquitinated in hepatocytes treated with palmitic acid. Ubiquitination is mediated by E3 ligase TRIM47 and leads to proteasomal degradation.

It is found in the cytoplasm. The protein resides in the perinuclear region. Its subcellular location is the cytoskeleton. It localises to the cell membrane. The protein localises to the microtubule organizing center. It is found in the centrosome. The protein resides in the spindle. Its subcellular location is the cilium basal body. It carries out the reaction Thiol-dependent hydrolysis of ester, thioester, amide, peptide and isopeptide bonds formed by the C-terminal Gly of ubiquitin (a 76-residue protein attached to proteins as an intracellular targeting signal).. Deubiquitinase that specifically cleaves 'Lys-63'- and linear 'Met-1'-linked polyubiquitin chains and is involved in NF-kappa-B activation and TNF-alpha-induced necroptosis. Negatively regulates NF-kappa-B activation by deubiquitinating upstream signaling factors. Contributes to the regulation of cell survival, proliferation and differentiation via its effects on NF-kappa-B activation. Negative regulator of Wnt signaling. Inhibits HDAC6 and thereby promotes acetylation of alpha-tubulin and stabilization of microtubules. Plays a role in the regulation of microtubule dynamics, and thereby contributes to the regulation of cell proliferation, cell polarization, cell migration, and angiogenesis. Required for normal cell cycle progress and normal cytokinesis. Inhibits nuclear translocation of NF-kappa-B. Plays a role in the regulation of inflammation and the innate immune response, via its effects on NF-kappa-B activation. Dispensable for the maturation of intrathymic natural killer cells, but required for the continued survival of immature natural killer cells. Negatively regulates TNFRSF11A signaling and osteoclastogenesis. Involved in the regulation of ciliogenesis, allowing ciliary basal bodies to migrate and dock to the plasma membrane; this process does not depend on NF-kappa-B activation. Ability to remove linear ('Met-1'-linked) polyubiquitin chains regulates innate immunity and TNF-alpha-induced necroptosis: recruited to the LUBAC complex via interaction with SPATA2 and restricts linear polyubiquitin formation on target proteins. Regulates innate immunity by restricting linear polyubiquitin formation on RIPK2 in response to NOD2 stimulation. Involved in TNF-alpha-induced necroptosis by removing linear ('Met-1'-linked) polyubiquitin chains from RIPK1, thereby regulating the kinase activity of RIPK1. Negatively regulates intestinal inflammation by removing 'Lys-63' linked polyubiquitin chain of NLRP6, thereby reducing the interaction between NLRP6 and PYCARD/ASC and formation of the NLRP6 inflammasome. Does not catalyze deubiquitination of heterotypic 'Lys-63'-/'Lys-48'-linked branched ubiquitin chains. Removes 'Lys-63' linked polyubiquitin chain of MAP3K7, which inhibits phosphorylation and blocks downstream activation of the JNK-p38 kinase cascades. Also removes 'Lys-63'-linked polyubiquitin chains of MAP3K1 and MA3P3K3, which inhibit their interaction with MAP2K1 and MAP2K2. The sequence is that of Ubiquitin carboxyl-terminal hydrolase CYLD (Cyld) from Rattus norvegicus (Rat).